A 147-amino-acid polypeptide reads, in one-letter code: Putative protein adenylyltransferase MJ1305 (147 aa).

A GSX(10)DXD motif motif is present at residues 32 to 46; the sequence is GSYARGTAVEYSDVD. Residues aspartate 44 and aspartate 46 each contribute to the Mg(2+) site.

The protein belongs to the MntA antitoxin family. Mg(2+) is required as a cofactor.

The catalysed reaction is L-tyrosyl-[protein] + ATP = O-(5'-adenylyl)-L-tyrosyl-[protein] + diphosphate. It catalyses the reaction O-(5'-adenylyl)-L-tyrosyl-[protein] + ATP = O-[5'-(adenylyl-(5'-&gt;3')-adenylyl)]-L-tyrosyl-[protein] + diphosphate. Its function is as follows. Putative antitoxin component of a putative type VII toxin-antitoxin (TA) system. Its cognate toxin might be MJ1304, which it might AMPylate. The polypeptide is Putative protein adenylyltransferase MJ1305 (Methanocaldococcus jannaschii (strain ATCC 43067 / DSM 2661 / JAL-1 / JCM 10045 / NBRC 100440) (Methanococcus jannaschii)).